Consider the following 617-residue polypeptide: 5-hydroxytryptamine receptor 2B (617 aa).

Over methionine 1 to valine 95 the chain is Extracellular. 4 N-linked (GlcNAc...) asparagine glycosylation sites follow: asparagine 31, asparagine 41, asparagine 51, and asparagine 58. Residues valine 96–isoleucine 116 traverse the membrane as a helical segment. Over leucine 117–leucine 128 the chain is Cytoplasmic. Residues valine 129–valine 149 traverse the membrane as a helical segment. Residues tyrosine 150–aspartate 164 are Extracellular-facing. A disulfide bridge connects residues cysteine 163 and cysteine 242. A helical membrane pass occupies residues isoleucine 165–alanine 185. The Cytoplasmic segment spans residues alanine 186–arginine 205. Residues valine 206–phenylalanine 226 form a helical membrane-spanning segment. At glycine 227 to cysteine 256 the chain is on the extracellular side. The chain crosses the membrane as a helical span at residues cysteine 257 to alanine 277. The Cytoplasmic portion of the chain corresponds to arginine 278 to glutamine 534. The disordered stretch occupies residues arginine 309–leucine 336. The span at lysine 317–valine 327 shows a compositional bias: basic and acidic residues. Residues threonine 535–leucine 555 form a helical membrane-spanning segment. The Extracellular segment spans residues threonine 556–alanine 570. A helical membrane pass occupies residues serine 571–phenylalanine 591. Residues asparagine 592–isoleucine 617 lie on the Cytoplasmic side of the membrane.

Belongs to the G-protein coupled receptor 1 family.

The protein resides in the cell membrane. Functionally, this is one of the several different receptors for 5-hydroxytryptamine (serotonin), a biogenic hormone that functions as a neurotransmitter, a hormone, and a mitogen. The activity of this receptor is mediated by G proteins which inhibit adenylate cyclase. The protein is 5-hydroxytryptamine receptor 2B (5-HT1B) of Drosophila melanogaster (Fruit fly).